Reading from the N-terminus, the 602-residue chain is Spermidine-citrate ligase (602 aa).

Residues 286–288 (SLR), Lys300, and Arg312 contribute to the ATP site.

It belongs to the IucA/IucC family.

The enzyme catalyses spermidine + citrate + ATP = N(8)-citryl-spermidine + AMP + diphosphate + H(+). It functions in the pathway siderophore biosynthesis; petrobactin biosynthesis. Involved in the biosynthesis of petrobactin, a catecholate siderophore that functions in both iron acquisition and virulence. Catalyzes the ATP-dependent condensation of citric acid and spermidine to form N(8)-citryl-spermidine. It can also catalyze the condensation of several di- and triamine analogs of spermidine with citric acid and the condensation of the citric acid analog tricarballylic acid with spermidine. Required for growth in iron-depleted medium and for full virulence in a mouse model of infection. The chain is Spermidine-citrate ligase from Bacillus anthracis.